Consider the following 945-residue polypeptide: MSQPPSGGAAPAATSASAAAAATEARMHPEGCSRKQQRAQSPARPRDNSLRQTAGATRSPLGVGPKLNSVRQQQLQQQQQQGNKITGRSTSGTGSRGLGGGAEKAVPSIPKGAVPGAVQPAPGAEGSPAAILASVSFRRSGQPEEAPREIESGPSKVGEPPPLGGVGGGGEGGGAGGGPGDREGGAPQPPPPRGWRGKGVRATQRGSSVAEGVSPSPPTAATSKTPGPGSRNSGSGSTGSGSGGGGSYWKEGCLQSELIQFHLKKERAAAAAAAAQMHTKNGGGGSRSSPVAGAPAICEPLVVPSSSPMAAAAEGPQQSAEGNGSGGAMQAAAPPSSQPHSQQLQEQEDMQEEMEKLREENETLKNEIDELRTEMDEMRDTFFEEDACQLQEMRHELERANKNCRILQYRLRKAERKRLRYAQTGEIDGELLRSLEQDLKVAKDVSVRLHHELENVEEKRTTTEDENEKLRQQLIEVEIAKQALQNELEKMKELSLKRRGSKDLPKSEKKAQQTPTEDDNEDLKCQLQFVKEEAALMRKKMAKIDKEKDRFEHELQKYRSFYGDLDSPLPKGEAGGPPSTREAELKLRLRLVEEEANILGRKIVELEVENRGLKAELDDLRGEDFNGSSNPLMREQSESLSELRQHLQLVEDETELLRRNVADLEEQNKRITAELNKYKYKSSGHDSSRHHDNAKTEALQEELKAARLQINELSGKVMQLQYENRVLMSNMQRYDLASHLGIRGSPRDSDAESDAGKKESDDDSRPPHRKREGPIGGESDSEEVRNIRSLTPTRSFYPTPGPWPKSFSDRQQMKDIRSEAERLGKTIDRLIADTSTIITEARIYVANGDLFGLMDEEDDGSRIREHELLYRINAQMKAFRKELQTFIDRLEVPKSADDRGAEEPISVSQMFQPIILLILILVLFSSLSYTTIFKLVFLFTLFFVL.

Composition is skewed to low complexity over residues 1-23 (MSQP…AAAT), 72-93 (QQQL…TSGT), and 110-126 (PKGA…GAEG). A signal peptide spans 1-25 (MSQPPSGGAAPAATSASAAAAATEA). Disordered regions lie at residues 1–250 (MSQP…SYWK), 265–293 (KERA…PVAG), 307–366 (SPMA…TLKN), and 494–522 (LSLK…DNED). Residues 141 to 151 (GQPEEAPREIE) are compositionally biased toward basic and acidic residues. The span at 164–179 (GGVGGGGEGGGAGGGP) shows a compositional bias: gly residues. Residues 219–235 (TAATSKTPGPGSRNSGS) are compositionally biased toward low complexity. Positions 236-247 (GSTGSGSGGGGS) are enriched in gly residues. The segment covering 328 to 345 (AMQAAAPPSSQPHSQQLQ) has biased composition (low complexity). A coiled-coil region spans residues 340–724 (HSQQLQEQED…GKVMQLQYEN (385 aa)). Composition is skewed to basic and acidic residues over residues 353–366 (EMEK…TLKN) and 494–511 (LSLK…EKKA). Serine 567 is modified (phosphoserine). The interval 741–811 (GIRGSPRDSD…PWPKSFSDRQ (71 aa)) is disordered. Residues 745 to 766 (SPRDSDAESDAGKKESDDDSRP) are compositionally biased toward basic and acidic residues. Residue serine 779 is modified to Phosphoserine. Positions 809–833 (DRQQMKDIRSEAERLGKTIDRLIAD) form a coiled coil. A helical membrane pass occupies residues 913–933 (PIILLILILVLFSSLSYTTIF).

This sequence belongs to the MTCL family.

Its subcellular location is the membrane. The polypeptide is Microtubule cross-linking factor 3 (Mtcl3) (Mus musculus (Mouse)).